A 171-amino-acid chain; its full sequence is Endoribonuclease YbeY (171 aa).

Residues histidine 130, histidine 134, and histidine 140 each contribute to the Zn(2+) site.

The protein belongs to the endoribonuclease YbeY family. It depends on Zn(2+) as a cofactor.

Its subcellular location is the cytoplasm. Single strand-specific metallo-endoribonuclease involved in late-stage 70S ribosome quality control and in maturation of the 3' terminus of the 16S rRNA. The sequence is that of Endoribonuclease YbeY from Neisseria gonorrhoeae (strain ATCC 700825 / FA 1090).